The following is a 1159-amino-acid chain: MLDFLAENNLCGQAILRIVSCGNAIIAEVLRLSEFIPAVFLLKDRADQQRYGDIIFDFSYFKGPEFWESKLEAKPELQDLDEEFRENNIEIVTRFYLAFQSVHKYIVDLNRYLDDLNEGVYIQQTLETVLLSEDGKQLLCEALYLYGVMLLVIDQKIEGEVRERMLVSYYRYSAARSSADSNMDDICKLLRSTGYSSQPGAKRPPNYPESYFQRVPINETFISMVIGRLRSDDIYNQVSAYPLPEHRSTALANQAAMLYVILYFEPSILHTHQAKMREIVDKYFPDNWVISIYMGITVNLADAWEPYKAAKTALNNTLDLANVKEQASRYASVSDRVRAQVQQFLKEGYLREEVLLDNIPRLLNCLRDCNVAIRWLMLHTADSACDPNNKRLRQIKDQILADSRYNPKILFQLLLDTAQFEFILKEMFKQMLSEKQSKWEHYKKEGSERMTELADVFSGVKPLTRVEKNENLQAWFREISKQILSLNYDDSTAAGRKTVQLIQALEEVQEFHQLESNLQVCQFLADTRKFLHQMIRTINIKEEVLITVQIIGDLSFAWQLIDSFTSIMQESIRVNPSMVTKLRATFLKLASALDLPLLRINQANSPDLLSVSQYYSGELVSYVRKVLQIIPESMFTSLLKIIKLQTHDIMEVPTRLDKDKLRDYAQLGPRYEVAKLTHAISIFTEGILMMKTTLVGIIKVDPKQLLEDGIRKELVKRVAFALHRGLIFNPRAKPSELMPKLKELGATMDGFHRSFEYIQDYVSIYGLKIWQEEVSRIINYNVEQECNNFLRTKIQDWQSMYQSTHIPIPKFAPVDESITFIGRLCREILRITDPKMTCYIDQLNTWYDVKTHQEVTSSRLFSEIQTTLGTFGLNGLDRLLCFMIVKELQNFLSMFQKIILKERTVQETLKMLMSAVNPLKSIVANSSKVYLSAITKTQKIWSAYLEAIMKVGQMQILRQQIANELNSSCRFDSRHLAAALDNLNKALLADIEAHYRDPSLPYPKEDNTLLYEITAYLEAAGIHNPLNKIYITTKRLPYFPIVNFLFLIAQLPKLQYNKNLGMVCRKPADPVDWPPLVLGLLTLLKQFHSRYTEQFLALIGQFIRSTMEQCTSQKMPEMPADAVGALLFLEDYVRYTKLPRRVAEAHVPNFIFDEFRTVL.

This sequence belongs to the strumpellin family. Component of the WASH core complex also described as WASH regulatory complex (SHRC) composed of WASH (WASHC1, WASH2P or WASH3P), WASHC2 (WASHC2A or WASHC2C), WASHC3, WASHC4 and WASHC5. The WASH core complex associates via WASHC2 with the F-actin-capping protein dimer (formed by CAPZA1, CAPZA2 or CAPZA3 and CAPZB) in a transient or substoichiometric manner which was initially described as WASH complex. Interacts with VCP, PI4K2A.

It localises to the cytoplasm. The protein localises to the cytosol. It is found in the endoplasmic reticulum. Its subcellular location is the early endosome. Acts as a component of the WASH core complex that functions as a nucleation-promoting factor (NPF) at the surface of endosomes, where it recruits and activates the Arp2/3 complex to induce actin polymerization, playing a key role in the fission of tubules that serve as transport intermediates during endosome sorting. May be involved in axonal outgrowth. Involved in cellular localization of ADRB2. Involved in cellular trafficking of BLOC-1 complex cargos such as ATP7A and VAMP7. Involved in cytokinesis and following polar body extrusion during oocyte meiotic maturation. This is WASH complex subunit 5 from Mus musculus (Mouse).